The primary structure comprises 375 residues: Alanine racemase (375 aa).

The Proton acceptor; specific for D-alanine role is filled by K35. At K35 the chain carries N6-(pyridoxal phosphate)lysine. A substrate-binding site is contributed by R130. Y253 acts as the Proton acceptor; specific for L-alanine in catalysis. Position 305 (M305) interacts with substrate.

Belongs to the alanine racemase family. Pyridoxal 5'-phosphate is required as a cofactor.

The enzyme catalyses L-alanine = D-alanine. It functions in the pathway amino-acid biosynthesis; D-alanine biosynthesis; D-alanine from L-alanine: step 1/1. Its function is as follows. Catalyzes the interconversion of L-alanine and D-alanine. May also act on other amino acids. This Ralstonia nicotianae (strain ATCC BAA-1114 / GMI1000) (Ralstonia solanacearum) protein is Alanine racemase (alr).